Reading from the N-terminus, the 465-residue chain is Cysteine--tRNA ligase (465 aa).

C29 is a Zn(2+) binding site. Residues 31–41 (PTVYNYIHIGN) carry the 'HIGH' region motif. The Zn(2+) site is built by C209, H234, and E238. The 'KMSKS' region signature appears at 266-270 (KMSKS). Residue K269 participates in ATP binding. S270 carries the phosphoserine modification.

It belongs to the class-I aminoacyl-tRNA synthetase family. As to quaternary structure, monomer. Zn(2+) is required as a cofactor.

The protein resides in the cytoplasm. The catalysed reaction is tRNA(Cys) + L-cysteine + ATP = L-cysteinyl-tRNA(Cys) + AMP + diphosphate. This chain is Cysteine--tRNA ligase, found in Bacillus cereus (strain 03BB102).